Reading from the N-terminus, the 45-residue chain is Large ribosomal subunit protein bL34 (45 aa).

The interval 22–45 is disordered; it reads RMRTKSGQNVIKARRRKGRARLTV. Residues 33–45 are compositionally biased toward basic residues; sequence KARRRKGRARLTV.

This sequence belongs to the bacterial ribosomal protein bL34 family.

The chain is Large ribosomal subunit protein bL34 from Thermosynechococcus vestitus (strain NIES-2133 / IAM M-273 / BP-1).